We begin with the raw amino-acid sequence, 545 residues long: Light-independent protochlorophyllide reductase subunit N (545 aa).

[4Fe-4S] cluster is bound by residues Cys102, Cys127, and Cys187.

This sequence belongs to the BchN/ChlN family. In terms of assembly, protochlorophyllide reductase is composed of three subunits; ChlL, ChlN and ChlB. Forms a heterotetramer of two ChlB and two ChlN subunits. [4Fe-4S] cluster is required as a cofactor.

It localises to the plastid. Its subcellular location is the chloroplast. It catalyses the reaction chlorophyllide a + oxidized 2[4Fe-4S]-[ferredoxin] + 2 ADP + 2 phosphate = protochlorophyllide a + reduced 2[4Fe-4S]-[ferredoxin] + 2 ATP + 2 H2O. Its pathway is porphyrin-containing compound metabolism; chlorophyll biosynthesis (light-independent). In terms of biological role, component of the dark-operative protochlorophyllide reductase (DPOR) that uses Mg-ATP and reduced ferredoxin to reduce ring D of protochlorophyllide (Pchlide) to form chlorophyllide a (Chlide). This reaction is light-independent. The NB-protein (ChlN-ChlB) is the catalytic component of the complex. The sequence is that of Light-independent protochlorophyllide reductase subunit N from Chlamydomonas reinhardtii (Chlamydomonas smithii).